The following is a 304-amino-acid chain: Ribonuclease Z (304 aa).

Residues His63, His65, Asp67, His68, His143, Asp213, and His271 each coordinate Zn(2+). Asp67 acts as the Proton acceptor in catalysis.

Belongs to the RNase Z family. In terms of assembly, homodimer. Zn(2+) is required as a cofactor.

It catalyses the reaction Endonucleolytic cleavage of RNA, removing extra 3' nucleotides from tRNA precursor, generating 3' termini of tRNAs. A 3'-hydroxy group is left at the tRNA terminus and a 5'-phosphoryl group is left at the trailer molecule.. In terms of biological role, zinc phosphodiesterase, which displays some tRNA 3'-processing endonuclease activity. Probably involved in tRNA maturation, by removing a 3'-trailer from precursor tRNA. This Bacteroides fragilis (strain ATCC 25285 / DSM 2151 / CCUG 4856 / JCM 11019 / LMG 10263 / NCTC 9343 / Onslow / VPI 2553 / EN-2) protein is Ribonuclease Z.